A 248-amino-acid polypeptide reads, in one-letter code: Triosephosphate isomerase (248 aa).

9-11 provides a ligand contact to substrate; sequence NWK. The Electrophile role is filled by His94. The active-site Proton acceptor is Glu166. Substrate is bound by residues Gly172, Ser212, and 233–234; that span reads GG.

This sequence belongs to the triosephosphate isomerase family. Homodimer.

It localises to the cytoplasm. It carries out the reaction D-glyceraldehyde 3-phosphate = dihydroxyacetone phosphate. It participates in carbohydrate biosynthesis; gluconeogenesis. The protein operates within carbohydrate degradation; glycolysis; D-glyceraldehyde 3-phosphate from glycerone phosphate: step 1/1. In terms of biological role, involved in the gluconeogenesis. Catalyzes stereospecifically the conversion of dihydroxyacetone phosphate (DHAP) to D-glyceraldehyde-3-phosphate (G3P). This is Triosephosphate isomerase from Alkaliphilus oremlandii (strain OhILAs) (Clostridium oremlandii (strain OhILAs)).